A 1590-amino-acid polypeptide reads, in one-letter code: von Willebrand factor D and EGF domain-containing protein (1590 aa).

The signal sequence occupies residues 1–20 (MPGGACVLVIALMFLAWGEA). N-linked (GlcNAc...) asparagine glycosylation occurs at asparagine 367. The region spanning 423-606 (AYCYTFTDPH…EWRILPGKSM (184 aa)) is the VWFD domain. 2 disulfides stabilise this stretch: cysteine 425-cysteine 565 and cysteine 468-cysteine 477. Residues asparagine 703 and asparagine 968 are each glycosylated (N-linked (GlcNAc...) asparagine). The 40-residue stretch at 1177–1216 (TVKSCDCLNGGSCVSDRNFSPGSGVYLCVCLPGFHGSLCE) folds into the EGF-like 1 domain. Disulfide bonds link cysteine 1181–cysteine 1189, cysteine 1183–cysteine 1204, and cysteine 1206–cysteine 1215. Basic and acidic residues predominate over residues 1268–1280 (DKSVNKEEDDKNA). Residues 1268–1288 (DKSVNKEEDDKNAQGRKRHVK) form a disordered region. EGF-like domains lie at 1294-1326 (AFTI…SNCQ), 1358-1390 (DEEH…PRCE), 1422-1454 (STAL…EHCQ), 1455-1486 (NAFC…RRFQ), 1518-1550 (NTPI…VRCQ), and 1551-1582 (IPIC…VKCE). 17 cysteine pairs are disulfide-bonded: cysteine 1298-cysteine 1308, cysteine 1302-cysteine 1314, cysteine 1316-cysteine 1325, cysteine 1362-cysteine 1372, cysteine 1366-cysteine 1378, cysteine 1380-cysteine 1389, cysteine 1426-cysteine 1436, cysteine 1430-cysteine 1442, cysteine 1444-cysteine 1453, cysteine 1458-cysteine 1468, cysteine 1462-cysteine 1474, cysteine 1522-cysteine 1532, cysteine 1526-cysteine 1538, cysteine 1540-cysteine 1549, cysteine 1554-cysteine 1564, cysteine 1558-cysteine 1570, and cysteine 1572-cysteine 1581.

The protein localises to the secreted. In Homo sapiens (Human), this protein is von Willebrand factor D and EGF domain-containing protein (VWDE).